Reading from the N-terminus, the 492-residue chain is UDP-glucosyl transferase 73DL1 (492 aa).

Residue histidine 27 is the Proton acceptor of the active site. The active-site Charge relay is aspartate 131. UDP-binding residues include tryptophan 352, valine 353, histidine 370, threonine 375, glutamate 378, and tyrosine 392.

It belongs to the UDP-glycosyltransferase family. In terms of tissue distribution, mainly expressed in flowers, flower buds and young leaves, and, to a lesser extent, in old leaves, stems and roots.

It functions in the pathway secondary metabolite biosynthesis; terpenoid biosynthesis. Its function is as follows. Component of the oleanane-type triterpene saponins (e.g. saponarioside A and saponarioside B) biosynthetic pathway, leading to the production of natural products with detergent properties used as traditional sources of soap. A glycosyltransferase that mediates the conversion of QA-mono to QA-di via the elongation of the C-3 sugar chain with a D-galactose. The sequence is that of UDP-glucosyl transferase 73DL1 from Saponaria officinalis (Common soapwort).